Here is a 362-residue protein sequence, read N- to C-terminus: S-adenosylmethionine:tRNA ribosyltransferase-isomerase (362 aa).

The protein belongs to the QueA family. As to quaternary structure, monomer.

The protein resides in the cytoplasm. The catalysed reaction is 7-aminomethyl-7-carbaguanosine(34) in tRNA + S-adenosyl-L-methionine = epoxyqueuosine(34) in tRNA + adenine + L-methionine + 2 H(+). Its pathway is tRNA modification; tRNA-queuosine biosynthesis. Transfers and isomerizes the ribose moiety from AdoMet to the 7-aminomethyl group of 7-deazaguanine (preQ1-tRNA) to give epoxyqueuosine (oQ-tRNA). The chain is S-adenosylmethionine:tRNA ribosyltransferase-isomerase from Deinococcus radiodurans (strain ATCC 13939 / DSM 20539 / JCM 16871 / CCUG 27074 / LMG 4051 / NBRC 15346 / NCIMB 9279 / VKM B-1422 / R1).